The chain runs to 330 residues: Aspartate--ammonia ligase (330 aa).

Belongs to the class-II aminoacyl-tRNA synthetase family. AsnA subfamily.

The protein resides in the cytoplasm. It carries out the reaction L-aspartate + NH4(+) + ATP = L-asparagine + AMP + diphosphate + H(+). The protein operates within amino-acid biosynthesis; L-asparagine biosynthesis; L-asparagine from L-aspartate (ammonia route): step 1/1. This is Aspartate--ammonia ligase from Escherichia coli O45:K1 (strain S88 / ExPEC).